The chain runs to 145 residues: Deoxyuridine 5'-triphosphate nucleotidohydrolase (145 aa).

Substrate contacts are provided by residues 65 to 67, asparagine 78, 82 to 84, and lysine 92; these read RSG and TID.

The protein belongs to the dUTPase family. Requires Mg(2+) as cofactor.

It catalyses the reaction dUTP + H2O = dUMP + diphosphate + H(+). Its pathway is pyrimidine metabolism; dUMP biosynthesis; dUMP from dCTP (dUTP route): step 2/2. Its function is as follows. This enzyme is involved in nucleotide metabolism: it produces dUMP, the immediate precursor of thymidine nucleotides and it decreases the intracellular concentration of dUTP so that uracil cannot be incorporated into DNA. The protein is Deoxyuridine 5'-triphosphate nucleotidohydrolase of Syntrophomonas wolfei subsp. wolfei (strain DSM 2245B / Goettingen).